Here is a 214-residue protein sequence, read N- to C-terminus: MARVKICGLTRGADLRAAIDAGADAVGVISEVPVDSPREVDPATAAELLADVPPFVTATLVTMPDSAERAVELLRTICPDAIQLHGEWTPDEIRFIRAETERKVLLAVDADDPARAEEFDRVADALVIDSTDDSGAGGTGETHDWERAGDLADRLTSPVVLAGGLTADNVAEAVRAADPFAVDVASGVELTDGRKDHNAVARFVANAGREMELA.

This sequence belongs to the TrpF family.

The catalysed reaction is N-(5-phospho-beta-D-ribosyl)anthranilate = 1-(2-carboxyphenylamino)-1-deoxy-D-ribulose 5-phosphate. It participates in amino-acid biosynthesis; L-tryptophan biosynthesis; L-tryptophan from chorismate: step 3/5. In Halorubrum lacusprofundi (strain ATCC 49239 / DSM 5036 / JCM 8891 / ACAM 34), this protein is N-(5'-phosphoribosyl)anthranilate isomerase.